The sequence spans 349 residues: Alanine racemase (349 aa).

The active-site Proton acceptor; specific for D-alanine is Lys35. Position 35 is an N6-(pyridoxal phosphate)lysine (Lys35). Position 130 (Arg130) interacts with substrate. Residue Tyr244 is the Proton acceptor; specific for L-alanine of the active site. Residue Met292 participates in substrate binding.

The protein belongs to the alanine racemase family. Requires pyridoxal 5'-phosphate as cofactor.

It carries out the reaction L-alanine = D-alanine. The protein operates within amino-acid biosynthesis; D-alanine biosynthesis; D-alanine from L-alanine: step 1/1. Its function is as follows. Catalyzes the interconversion of L-alanine and D-alanine. May also act on other amino acids. The protein is Alanine racemase (alr) of Cereibacter sphaeroides (strain ATCC 17025 / ATH 2.4.3) (Rhodobacter sphaeroides).